We begin with the raw amino-acid sequence, 453 residues long: Ribosomal protein uS12 methylthiotransferase RimO (453 aa).

In terms of domain architecture, MTTase N-terminal spans 3 to 118; the sequence is KKVGIISLGC…IAKVIEEFYS (116 aa). Residues Cys12, Cys48, Cys81, Cys162, Cys166, and Cys169 each contribute to the [4Fe-4S] cluster site. Residues 148–378 enclose the Radical SAM core domain; the sequence is STNSGYAYLK…MQLQKEIVQR (231 aa). A TRAM domain is found at 381-449; sequence ESRLEKVYKT…DYDLIGEVIN (69 aa).

Belongs to the methylthiotransferase family. RimO subfamily. It depends on [4Fe-4S] cluster as a cofactor.

The protein localises to the cytoplasm. It carries out the reaction L-aspartate(89)-[ribosomal protein uS12]-hydrogen + (sulfur carrier)-SH + AH2 + 2 S-adenosyl-L-methionine = 3-methylsulfanyl-L-aspartate(89)-[ribosomal protein uS12]-hydrogen + (sulfur carrier)-H + 5'-deoxyadenosine + L-methionine + A + S-adenosyl-L-homocysteine + 2 H(+). Its function is as follows. Catalyzes the methylthiolation of an aspartic acid residue of ribosomal protein uS12. The sequence is that of Ribosomal protein uS12 methylthiotransferase RimO from Acetivibrio thermocellus (strain ATCC 27405 / DSM 1237 / JCM 9322 / NBRC 103400 / NCIMB 10682 / NRRL B-4536 / VPI 7372) (Clostridium thermocellum).